The sequence spans 840 residues: Microcephalin (840 aa).

In terms of domain architecture, BRCT 1 spans 1–93 (MAAHILKDVV…AHIDESLFPA (93 aa)). The disordered stretch occupies residues 184–206 (KEKRENLSPSSSQMIQQSHDNPS). Positions 190 to 206 (LSPSSSQMIQQSHDNPS) are enriched in polar residues. Phosphoserine occurs at positions 279, 287, 296, and 333. Disordered regions lie at residues 313–379 (PDQK…SIRR) and 418–437 (PDNLKERNSENLPPTSQLPS). Residue T335 is modified to Phosphothreonine. The span at 355–378 (KRQRVSHGSHSPSKGKSKRKRSIR) shows a compositional bias: basic residues. A compositionally biased stretch (polar residues) spans 427–437 (ENLPPTSQLPS). Residue S552 is modified to Phosphoserine. The disordered stretch occupies residues 562 to 586 (LKSTQNKGTTSKISNSSEGEAQSEH). The segment covering 563 to 581 (KSTQNKGTTSKISNSSEGE) has biased composition (polar residues). BRCT domains lie at 644–734 (SGRG…PFEL) and 755–837 (YRGT…NYLL).

Interacts with CDC27 and maybe other components of the APC/C complex. Interacts with histone variant H2AX under DNA damage conditions.

The protein resides in the cytoplasm. The protein localises to the cytoskeleton. It is found in the microtubule organizing center. It localises to the centrosome. Implicated in chromosome condensation and DNA damage induced cellular responses. May play a role in neurogenesis and regulation of the size of the cerebral cortex. This chain is Microcephalin, found in Hylobates lar (Lar gibbon).